Here is a 130-residue protein sequence, read N- to C-terminus: Protein ApaG (130 aa).

An ApaG domain is found at 3–127; it reads RALTRDIEVT…FSLDSPGLVR (125 aa).

This Rhizobium meliloti (strain 1021) (Ensifer meliloti) protein is Protein ApaG.